Here is a 396-residue protein sequence, read N- to C-terminus: 1-deoxy-D-xylulose 5-phosphate reductoisomerase (396 aa).

Positions 15, 16, 17, 18, 41, and 129 each coordinate NADPH. K130 contributes to the 1-deoxy-D-xylulose 5-phosphate binding site. E131 lines the NADPH pocket. A Mn(2+)-binding site is contributed by D155. 1-deoxy-D-xylulose 5-phosphate is bound by residues S156, E157, S182, and H205. Residue E157 coordinates Mn(2+). Position 211 (G211) interacts with NADPH. The 1-deoxy-D-xylulose 5-phosphate site is built by S218, N223, K224, and E227. E227 lines the Mn(2+) pocket.

This sequence belongs to the DXR family. Mg(2+) serves as cofactor. The cofactor is Mn(2+).

The catalysed reaction is 2-C-methyl-D-erythritol 4-phosphate + NADP(+) = 1-deoxy-D-xylulose 5-phosphate + NADPH + H(+). It functions in the pathway isoprenoid biosynthesis; isopentenyl diphosphate biosynthesis via DXP pathway; isopentenyl diphosphate from 1-deoxy-D-xylulose 5-phosphate: step 1/6. Functionally, catalyzes the NADPH-dependent rearrangement and reduction of 1-deoxy-D-xylulose-5-phosphate (DXP) to 2-C-methyl-D-erythritol 4-phosphate (MEP). The sequence is that of 1-deoxy-D-xylulose 5-phosphate reductoisomerase from Xanthomonas oryzae pv. oryzae (strain MAFF 311018).